The chain runs to 119 residues: MKRIAFVFSTVPHGTAAGREGLDALLATSALTDELAVFFIADGVFQLLPGQKPDAVLARDYIATFKLLGLYDIEQCWVCAASLRERGLDPQTPFVVEATPLEADALRRELANYDVILRF.

The protein belongs to the DsrF/TusC family. In terms of assembly, heterohexamer, formed by a dimer of trimers. The hexameric TusBCD complex contains 2 copies each of TusB, TusC and TusD. The TusBCD complex interacts with TusE.

It is found in the cytoplasm. In terms of biological role, part of a sulfur-relay system required for 2-thiolation of 5-methylaminomethyl-2-thiouridine (mnm(5)s(2)U) at tRNA wobble positions. The polypeptide is Protein TusC (Shigella dysenteriae serotype 1 (strain Sd197)).